The chain runs to 659 residues: Enzymatic polyprotein (659 aa).

The tract at residues 1–180 (MSLRNRTNPN…FLEEGGNHVD (180 aa)) is protease. Asp-34 is a catalytic residue. The Reverse transcriptase domain maps to 252 to 436 (LELKVIKPSK…EKINFLGLEI (185 aa)).

Belongs to the caulimoviridae enzymatic polyprotein family.

It catalyses the reaction DNA(n) + a 2'-deoxyribonucleoside 5'-triphosphate = DNA(n+1) + diphosphate. Encodes for at least two polypeptides: protease (PR) and reverse transcriptase (RT). The protease processes the polyprotein in cis. Reverse transcriptase is multifunctional enzyme that converts the viral RNA genome into dsDNA in viral cytoplasmic capsids. This enzyme displays a DNA polymerase activity that can copy either DNA or RNA templates, and a ribonuclease H (RNase H) activity that cleaves the RNA strand of RNA-DNA heteroduplexes in a partially processive 3'- to 5'-endonucleasic mode. Neo-synthesized pregenomic RNA (pgRNA) are encapsidated, and reverse-transcribed inside the nucleocapsid. Partial (+)DNA is synthesized from the (-)DNA template and generates the relaxed circular DNA (RC-DNA) genome. After budding and infection, the RC-DNA migrates in the nucleus, and is converted into a plasmid-like covalently closed circular DNA (cccDNA). The chain is Enzymatic polyprotein from Dianthus caryophyllus (Carnation).